Reading from the N-terminus, the 460-residue chain is MQKLWEGRFSEASSALLEEFNASINFDKKLYKDDIEGSIAHSSMLANCGILSKDEVDKIKNGLNQILNEIESGNFEFKISDEDIHMAIEKRLAEIIGKNTAGRLHTARSRNDQVATDFRHFCMRENLAIAELLRTFVKALVEIAEKNIQTLMPGFTHLQHAQPISLAEHLLAYAFMFKRDFERFISSYERNNFSPLGSAALAGTPHMIDRFETAETLGFKAPMSNSMDGVSDRDFALEILFNISVVFTHTSRLCEELILWNSQEFGFITISDAFSTGSSIMPQKKNPDVAELIRGKTGRIYGNLISLLTTMKGLALAYNKDMQEDKECVFDSVKEVHTSVVILREMLKTAKFNEKNMLKACKKGHLTATDLADYLVREKNIPFRKAHFIVGKCVATAESLGLDLSEMSLENLQKIDGEIDENALKCLDLFNSKNSRKSYGGTADESVRVQIEILKKWLKK.

The protein belongs to the lyase 1 family. Argininosuccinate lyase subfamily.

The protein resides in the cytoplasm. It carries out the reaction 2-(N(omega)-L-arginino)succinate = fumarate + L-arginine. It functions in the pathway amino-acid biosynthesis; L-arginine biosynthesis; L-arginine from L-ornithine and carbamoyl phosphate: step 3/3. This is Argininosuccinate lyase from Campylobacter hominis (strain ATCC BAA-381 / DSM 21671 / CCUG 45161 / LMG 19568 / NCTC 13146 / CH001A).